We begin with the raw amino-acid sequence, 937 residues long: Protein translocase subunit SecA (937 aa).

Residues Q90, 108-112, and D509 each bind ATP; that span reads GEGKT.

This sequence belongs to the SecA family. In terms of assembly, monomer and homodimer. Part of the essential Sec protein translocation apparatus which comprises SecA, SecYEG and auxiliary proteins SecDF. Other proteins may also be involved.

Its subcellular location is the cell inner membrane. It localises to the cellular thylakoid membrane. The protein localises to the cytoplasm. The enzyme catalyses ATP + H2O + cellular proteinSide 1 = ADP + phosphate + cellular proteinSide 2.. Functionally, part of the Sec protein translocase complex. Interacts with the SecYEG preprotein conducting channel. Has a central role in coupling the hydrolysis of ATP to the transfer of proteins into and across the cell membrane, serving as an ATP-driven molecular motor driving the stepwise translocation of polypeptide chains across the membrane. Its function is as follows. Probably participates in protein translocation into and across both the cytoplasmic and thylakoid membranes in cyanobacterial cells. The polypeptide is Protein translocase subunit SecA (Parasynechococcus marenigrum (strain WH8102)).